We begin with the raw amino-acid sequence, 103 residues long: Large ribosomal subunit protein bL21 (103 aa).

The protein belongs to the bacterial ribosomal protein bL21 family. Part of the 50S ribosomal subunit. Contacts protein L20.

In terms of biological role, this protein binds to 23S rRNA in the presence of protein L20. In Brevibacillus brevis (strain 47 / JCM 6285 / NBRC 100599), this protein is Large ribosomal subunit protein bL21.